A 649-amino-acid chain; its full sequence is Probable ADP-ribosylation factor GTPase-activating protein AGD14 (649 aa).

In terms of domain architecture, Arf-GAP spans 12–130 (EKIIRGLMKL…KYAGANDADK (119 aa)). A C4-type zinc finger spans residues 27 to 50 (CINCNSLGPQYVCTTFWTFVCMAC). 4 disordered regions span residues 124–159 (GAND…QSPP), 209–279 (FSNE…VRSV), 294–316 (LGEA…SNHV), and 366–391 (FTPA…SAPK). Positions 127-146 (DADKPSKDSQDHVSSEDMTR) are enriched in basic and acidic residues. Residues 150–159 (SYHSYSQSPP) show a composition bias toward low complexity. Composition is skewed to polar residues over residues 248 to 257 (PQFQHSNAPP), 269 to 279 (RTTSSGSVRSV), 300 to 315 (ESRQ…TSNH), and 366 to 385 (FTPA…SRPS).

In terms of biological role, GTPase-activating protein (GAP) for ADP ribosylation factor (ARF). This Arabidopsis thaliana (Mouse-ear cress) protein is Probable ADP-ribosylation factor GTPase-activating protein AGD14 (AGD14).